Reading from the N-terminus, the 105-residue chain is Toxin ParE2 (105 aa).

The protein belongs to the RelE toxin family.

Its function is as follows. Toxic component of a type II toxin-antitoxin (TA) system. Its toxic effect is neutralized by coexpression with cognate antitoxin ParD2. The chain is Toxin ParE2 (parE2) from Mycobacterium tuberculosis (strain CDC 1551 / Oshkosh).